The chain runs to 446 residues: N-succinylarginine dihydrolase (446 aa).

Substrate contacts are provided by residues 19–28, asparagine 110, and 137–138; these read AGLSFGNVAS and HR. Glutamate 174 is an active-site residue. Residue arginine 213 coordinates substrate. The active site involves histidine 249. Substrate contacts are provided by aspartate 251 and asparagine 364. Catalysis depends on cysteine 370, which acts as the Nucleophile.

The protein belongs to the succinylarginine dihydrolase family. In terms of assembly, homodimer.

The enzyme catalyses N(2)-succinyl-L-arginine + 2 H2O + 2 H(+) = N(2)-succinyl-L-ornithine + 2 NH4(+) + CO2. It functions in the pathway amino-acid degradation; L-arginine degradation via AST pathway; L-glutamate and succinate from L-arginine: step 2/5. In terms of biological role, catalyzes the hydrolysis of N(2)-succinylarginine into N(2)-succinylornithine, ammonia and CO(2). The protein is N-succinylarginine dihydrolase of Burkholderia ambifaria (strain MC40-6).